The sequence spans 97 residues: Large ribosomal subunit protein eL21 (97 aa).

The protein belongs to the eukaryotic ribosomal protein eL21 family.

The protein is Large ribosomal subunit protein eL21 of Methanospirillum hungatei JF-1 (strain ATCC 27890 / DSM 864 / NBRC 100397 / JF-1).